We begin with the raw amino-acid sequence, 966 residues long: MASTTVAQLAAELSRSAAALLEQLQAAGLGKATPEDIVTESDKTRLLDYLKRSHGQADDSARKKITLTKRETSEIRQADSTGKTRTVQVEVRKKRVLIKRDEAGADQHNEAADQHALAAEAAEQARREEEERQQAAELARQEAEAKARREAAEREEAERRAKQEALEAEQRRQAELLARKAEEEAAAARAVGEAAEDASRKKAEDEQARVAVERAAAQKAADDAKAAADKARAEQDAARKRREAAEAEARAIQQMLNAPARVLKAPSERKAEEKKAEQTGTLHKPVKPASATATEAKAGDKKPAATTTTTTATTTADKKGKTGKPGSWQDDSSRKKGSGLKTRGDSSGGVGGWRGGPRGRGGRQQHADDGRSNFQAPTEPVVREVHVPETISVADLAHKMAVKASEVIKQMMKLGQMVTINQVLDQETAMIVVEEMGHKAFAAKLDDPEALLVVDGEEHTDAEQLPRPPVVTVMGHVDHGKTSLLDYIRRAKVAAGEAGGITQHIGAYHVETERGVITFLDTPGHEAFTAMRARGAKATDIVILVVAADDGVMPQTKEAIAHAKAAGVPIVVAINKIDKPDANPDRVKQELVAEQVLPEEYGGDSPFVPVSAKTGAGIEDLLEQVLLQAEVLELKAPVDAPAKGLVVEAQLDKGKGPIATILVSSGTLKRGDVVLAGSAYGRVRAMLDENGKPTKEAGPSIPVEIQGLSEVPAAGEEVLVLPDERKAREIALFRQGKFRDVKLAKQQAAKLETMLEQMTEGDVQTLPLIVKADVQGSQEALVQSLQKLSTAEVRVQIVHAGVGAISESDVNLATASKAVIIGFNVRADAGARKLAENHGIDIRYYNIIYDAVDEIKAAMSGMLAPEKRETTIGQVEVRQVFRVPKIGAVAGCMVTDGLVKRNSLVRVLRNNVVVHTGELDSLKRFKDDVKEVKQGFECGLSIKNFNDVQEGDQLEVYEITEVARTL.

5 stretches are compositionally biased toward basic and acidic residues: residues K99–D113, E123–E183, D197–V212, A220–A249, and P266–E277. Positions K99 to V382 are disordered. Positions A304 to T315 are enriched in low complexity. The span at S346–G359 shows a compositional bias: gly residues. The region spanning P466–K635 is the tr-type G domain. The tract at residues G475–T482 is G1. G475–T482 is a binding site for GTP. Residues G500–H504 are G2. A G3 region spans residues D521–G524. GTP-binding positions include D521–H525 and N575–D578. A G4 region spans residues N575–D578. The segment at S611 to K613 is G5.

Belongs to the TRAFAC class translation factor GTPase superfamily. Classic translation factor GTPase family. IF-2 subfamily.

Its subcellular location is the cytoplasm. Its function is as follows. One of the essential components for the initiation of protein synthesis. Protects formylmethionyl-tRNA from spontaneous hydrolysis and promotes its binding to the 30S ribosomal subunits. Also involved in the hydrolysis of GTP during the formation of the 70S ribosomal complex. In Cupriavidus pinatubonensis (strain JMP 134 / LMG 1197) (Cupriavidus necator (strain JMP 134)), this protein is Translation initiation factor IF-2.